A 991-amino-acid polypeptide reads, in one-letter code: Pentatricopeptide repeat-containing protein At1g73710 (991 aa).

Disordered regions lie at residues 1-27 (MLQP…HHHH) and 61-81 (SSSS…RKRK). Residues 15 to 27 (VRHHHHHHHHHHH) are compositionally biased toward basic residues. The segment covering 61–73 (SSSSVSPPRCSKP) has biased composition (low complexity). 19 PPR repeats span residues 144 to 178 (NVIH…GVLP), 179 to 213 (TNNT…MHFP), 214 to 248 (DEVT…KVDL), 304 to 338 (LTST…GVPI), 339 to 373 (DTVT…GISP), 374 to 408 (DTKT…GLFP), 409 to 443 (DTVT…SIRI), 444 to 474 (DEHS…FQLD), 478 to 513 (SSTT…GQRN), 514 to 548 (DVLE…GTWP), 549 to 583 (DECT…GCKP), 584 to 618 (GCKT…GVKP), 619 to 653 (NEVV…GVQS), 654 to 688 (NHIV…EGGP), 689 to 719 (DVAA…LREK), 723 to 757 (DVIS…GLLS), 758 to 792 (DCTS…RKLL), 862 to 896 (EHFA…GLEP), and 897 to 931 (DIVT…ELEP). A compositionally biased stretch (basic and acidic residues) spans 965–974 (AERECSSRSG). A disordered region spans residues 965–991 (AERECSSRSGEEEEDDEEENSEEDEAF). Acidic residues predominate over residues 975–991 (EEEEDDEEENSEEDEAF).

It belongs to the PPR family. P subfamily.

This Arabidopsis thaliana (Mouse-ear cress) protein is Pentatricopeptide repeat-containing protein At1g73710.